The following is a 187-amino-acid chain: CASP-like protein 2 (187 aa).

Over 1 to 24 (MKVSAVETGEISQVSAPRKGMIRG) the chain is Cytoplasmic. Residues 25-45 (LSIMDFILRIVAAIGTLGSAL) traverse the membrane as a helical segment. Residues 46-72 (STGTTRETLPFTTQFVKFRAVFDDLPT) lie on the Extracellular side of the membrane. Residues 73–93 (FVFFVTSNSIVCGYLVLSLAL) traverse the membrane as a helical segment. The Cytoplasmic portion of the chain corresponds to 94-108 (SFFHIIRRSSAAKSR). The chain crosses the membrane as a helical span at residues 109 to 129 (ILLVFLDTVMFGLLTTGAAAA). Over 130-163 (GTIVYVSHYGNVNANWFPFCGQYNHFCERISGSL) the chain is Extracellular. Residues 164–184 (IGSFIAVVIFMIIILMSAVSI) form a helical membrane-spanning segment. The Cytoplasmic portion of the chain corresponds to 185–187 (SKH).

It belongs to the Casparian strip membrane proteins (CASP) family. In terms of assembly, homodimer and heterodimers.

It localises to the cell membrane. The sequence is that of CASP-like protein 2 from Lotus japonicus (Lotus corniculatus var. japonicus).